A 289-amino-acid chain; its full sequence is Bidirectional sugar transporter SWEET11 (289 aa).

Residues 1-9 (MSLFNTENT) lie on the Extracellular side of the membrane. Residues 10–30 (WAFVFGLLGNLISFAVFLSPV) form a helical membrane-spanning segment. One can recognise a MtN3/slv 1 domain in the interval 12–98 (FVFGLLGNLI…SMFLAYAPKP (87 aa)). The Cytoplasmic portion of the chain corresponds to 31–43 (PTFYRIWKKKTTE). A helical transmembrane segment spans residues 44–64 (GFQSIPYVVALFSATLWLYYA). Over 65–70 (TQKKDV) the chain is Extracellular. Residues 71–91 (FLLVTINAFGCFIETIYISMF) traverse the membrane as a helical segment. At 92–105 (LAYAPKPARMLTVK) the chain is on the cytoplasmic side. Residues 106–126 (MLLLMNFGGFCAILLLCQFLV) form a helical membrane-spanning segment. Residues 127 to 133 (KGATRAK) are Extracellular-facing. Residues 134–154 (IIGGICVGFSVCVFAAPLSII) form a helical membrane-spanning segment. A MtN3/slv 2 domain is found at 134–218 (IIGGICVGFS…ILYVVYKYCK (85 aa)). At 155-167 (RTVIKTRSVEYMP) the chain is on the cytoplasmic side. The helical transmembrane segment at 168–188 (FSLSLTLTISAVIWLLYGLAL) threads the bilayer. The Extracellular portion of the chain corresponds to 189–192 (KDIY). A helical membrane pass occupies residues 193-213 (VAFPNVLGFALGALQMILYVV). The Cytoplasmic portion of the chain corresponds to 214-289 (YKYCKTSPHL…GKQSSSAAAT (76 aa)). The tract at residues 266 to 289 (DRRAEIEDGQTPKHGKQSSSAAAT) is disordered. Residue Thr-276 is modified to Phosphothreonine.

Belongs to the SWEET sugar transporter family. Forms homooligomers and heterooligomers with SWEET1, SWEET3, SWEET5, SWEET6, SWEET7, SWEET8, SWEET9, SWEET12, SWEET13, SWEET15 and SWEET17. Expressed in leaves, especially in phloem. Expressed in developing seeds.

The protein resides in the cell membrane. Functionally, mediates both low-affinity uptake and efflux of sugar across the plasma membrane. Involved in phloem loading by mediating export from parenchyma cells feeding H(+)-coupled import into the sieve element/companion cell complex, thus contributing to the sucrose migration from sites of synthesis in the mesophyll to the phloem. Contributes to seed filling by triggering sucrose efflux involved in the transfer of sugars from seed coat to embryos. The protein is Bidirectional sugar transporter SWEET11 of Arabidopsis thaliana (Mouse-ear cress).